We begin with the raw amino-acid sequence, 614 residues long: Adenylate kinase 7 (614 aa).

The interval 258–503 is adenylate kinase; it reads PIKICILGPP…KEIGKPRNYG (246 aa). An ATP-binding site is contributed by 268–273; it reads AVGKSS. The interval 288–346 is NMP; sequence KMKDVIAEAIAKLEAIVAPKDSVEGEEEGEEEEEEENVDDAQELLDGIKESMEQNAGRL. The tract at residues 308–327 is disordered; sequence DSVEGEEEGEEEEEEENVDD. A compositionally biased stretch (acidic residues) spans 311–327; sequence EGEEEGEEEEEEENVDD. Residues 323–346, 373–376, and Q380 contribute to the AMP site; these read ENVD…AGRL and GFPK. Positions 376–568 form a coiled coil; sequence KTYDQAKDLF…EERELLEVQS (193 aa). Residues 428–438 form an LID region; that stretch reads NLPESVVAGTH. R446 lines the AMP pocket. ATP is bound at residue G478. The interval 570-614 is DPY-30; that stretch reads PLRNYLMTYVMPTLMQGLNECCKVRPEDPVDFLAEYLFKNNPEMQ.

In the central section; belongs to the adenylate kinase family. It in the C-terminal section; belongs to the dpy-30 family.

The protein localises to the cytoplasm. Its subcellular location is the cytosol. It localises to the cell projection. It is found in the cilium. The protein resides in the flagellum. The enzyme catalyses AMP + ATP = 2 ADP. The catalysed reaction is a 2'-deoxyribonucleoside 5'-diphosphate + ATP = a 2'-deoxyribonucleoside 5'-triphosphate + ADP. It catalyses the reaction a ribonucleoside 5'-diphosphate + ATP = a ribonucleoside 5'-triphosphate + ADP. In terms of biological role, nucleoside monophosphate (NMP) kinase that catalyzes the reversible transfer of the terminal phosphate group between nucleoside triphosphates and monophosphates. Has highest activity toward AMP, and weaker activity toward dAMP, CMP and dCMP. Also displays broad nucleoside diphosphate kinase activity. Involved in maintaining ciliary structure and function. The chain is Adenylate kinase 7 (Ak7) from Mus musculus (Mouse).